A 195-amino-acid polypeptide reads, in one-letter code: GTP-dependent dephospho-CoA kinase (195 aa).

Residues D49, V50, D68, E127, and D150 each contribute to the GTP site.

It belongs to the GTP-dependent DPCK family.

It carries out the reaction 3'-dephospho-CoA + GTP = GDP + CoA + H(+). Its pathway is cofactor biosynthesis; coenzyme A biosynthesis. Its function is as follows. Catalyzes the GTP-dependent phosphorylation of the 3'-hydroxyl group of dephosphocoenzyme A to form coenzyme A (CoA). This is GTP-dependent dephospho-CoA kinase from Methanosarcina mazei (strain ATCC BAA-159 / DSM 3647 / Goe1 / Go1 / JCM 11833 / OCM 88) (Methanosarcina frisia).